The primary structure comprises 447 residues: MFKLGRNRALASAFAATSRAPLASRLPSVSQQQRRALSIHEYLSADLLRQYGIGVPKGDVARTGAEAEAIAKQIGGEDMVIKAQVLAGGRGKGTFDNGLKGGVRVIYSPTEAKMFAEQMIGHKLITKQTGAQGRLCSAVYICERKFARREFYLAVLMDRASQGPVIVSSSQGGMDIEGVAKENPEAIHTTYIDINVGVTDEMARDIATKLGFSEQCVEEAKDTIQKLYKIFCEKDATQIEINPLSETSDHKVMAMDAKFGFDDNADFRQPDIFKLRDTTQEDPDEVRAAQAGLNFIKLDGDIGCLVNGAGLAMATMDIIKLNGGQPANFLDVGGGATPAAIREAFELITSDPKVTAIFVNIFGGIVRCDAIAHGLINTVKSLDLKIPIIARLQGTNMEAARQLINDSGMKIFSIDDLQSAAEKSVQLSKVVKMARDIDVGVEFTLGI.

The transit peptide at 1-34 (MFKLGRNRALASAFAATSRAPLASRLPSVSQQQR) directs the protein to the mitochondrion. Positions 45–287 (ADLLRQYGIG…TTQEDPDEVR (243 aa)) constitute an ATP-grasp domain. ATP is bound by residues Lys-82, 89–91 (GRG), and Glu-150. Mg(2+) contacts are provided by Asn-242 and Asp-256. Substrate contacts are provided by residues Asn-307 and 364-366 (GIV).

It belongs to the succinate/malate CoA ligase beta subunit family. As to quaternary structure, heterodimer of an alpha and a beta subunit. The cofactor is Mg(2+).

It is found in the mitochondrion. The enzyme catalyses succinate + ATP + CoA = succinyl-CoA + ADP + phosphate. The protein operates within carbohydrate metabolism; tricarboxylic acid cycle; succinate from succinyl-CoA (ligase route): step 1/1. Functionally, succinyl-CoA synthetase functions in the citric acid cycle (TCA), coupling the hydrolysis of succinyl-CoA to the synthesis of ATP and thus represents the only step of substrate-level phosphorylation in the TCA. The beta subunit provides nucleotide specificity of the enzyme and binds the substrate succinate, while the binding sites for coenzyme A and phosphate are found in the alpha subunit. This is Succinate--CoA ligase [ADP-forming] subunit beta, mitochondrial from Neurospora crassa (strain ATCC 24698 / 74-OR23-1A / CBS 708.71 / DSM 1257 / FGSC 987).